Consider the following 3119-residue polypeptide: Huntingtin (3119 aa).

Residues 1 to 65 are disordered; sequence MATLEKLMKA…LPGPAEEPLH (65 aa). Lysine 9 is subject to N6-acetyllysine. The segment covering 24 to 60 has biased composition (pro residues); the sequence is QPPPQAPPPPPPPPPQPPQPPPQGQPPPPPPPLPGPA. N6-acetyllysine occurs at positions 155 and 213. 2 HEAT repeats span residues 183-220 and 225-262; these read PYLVNLLPCLTRTSKRPEESVQETLAAAVPKIMASFGN and NEIKVLLKAFIANLKSSSPTVRRTAAGSAVSICQHSRR. Residue lysine 322 is modified to N6-acetyllysine. Residues serine 396, serine 398, and serine 411 each carry the phosphoserine modification. Lysine 421 is modified (N6-acetyllysine). The interval 470 to 481 is interaction with ZDHHC17; it reads GHDIITEQPRSQ. Residues 495 to 558 form a disordered region; it reads DLTSAATDGD…DSAVTPSDSS (64 aa). The segment covering 529 to 558 has biased composition (polar residues); sequence DGTQASSPISDSSQTTTEGPDSAVTPSDSS. Glycine 530 carries N-myristoyl glycine lipidation. Phosphoserine is present on residues serine 620 and serine 623. 2 HEAT repeats span residues 782-819 and 882-920; these read FSLVDCIPLLQKTLKDESSVTCKLACTAVRHCVLSLCS and KLQERVLNNVVIYLLGDEDPRVRHVAATSLTRLVPKLFY. The segment at 1146-1204 is disordered; it reads KAALPSLTNPPSLSPIRRKGKEKEPGEQASTPMSPKKVGEASAASRQSDTSGPVTASKS. Low complexity predominate over residues 1149–1160; the sequence is LPSLTNPPSLSP. A phosphoserine; by CDK5 mark is found at serine 1159 and serine 1179. Polar residues predominate over residues 1189 to 1204; it reads ASRQSDTSGPVTASKS. Residues 1404–1441 form an HEAT 5 repeat; sequence LFEPLVIKALKQYTTTTSVQLQKQVLDLLAQLVQLRVN. Residue serine 1853 is modified to Phosphoserine. Residues 2372-2381 carry the Nuclear export signal motif; the sequence is IVISLARLPL. The disordered stretch occupies residues 2610 to 2637; that stretch reads EEEWDEEEEEESDVPAPTSPPVSPVNSR. The segment covering 2611–2622 has biased composition (acidic residues); the sequence is EEWDEEEEEESD.

Belongs to the huntingtin family. Interacts with PFN1. Interacts through its N-terminus with PRPF40A. Interacts with PQBP1. Interacts with SETD2. Interacts with SH3GLB1. Interacts with SYVN. Interacts with TPR; the interaction is inhibited by forms of Huntingtin with expanded polyglutamine stretch. Interacts with ZDHHC13 (via ANK repeats). Interacts with ZDHHC17 (via ANK repeats). Interacts with F8A1/F8A2/F8A3. Found in a complex with F8A1/F8A2/F8A3, HTT and RAB5A; mediates the recruitment of HTT by RAB5A. Post-translationally, phosphorylation at Ser-1159 and Ser-1179 by CDK5 in response to DNA damage in nuclei of neurons protects neurons against polyglutamine expansion as well as DNA damage mediated toxicity. Cleaved by caspases downstream of the polyglutamine stretch. In terms of processing, myristoylated at Gly-530, following proteolytic cleavage at Asp-529. The highest level is seen throughout the brain, but it is also found in the stomach, heart, testis, adipose tissue, muscle, spleen, liver, and kidney.

The protein localises to the cytoplasm. The protein resides in the nucleus. Its subcellular location is the cytoplasmic vesicle. It is found in the autophagosome. In terms of biological role, may play a role in microtubule-mediated transport or vesicle function. Its function is as follows. Promotes the formation of autophagic vesicles. The sequence is that of Huntingtin (Htt) from Mus musculus (Mouse).